The chain runs to 548 residues: Membrane protein insertase YidC (548 aa).

The chain crosses the membrane as a helical span at residues 6–26; it reads NLLIIALLFVSFMIWQAWEQD. Residues 28–52 are disordered; that stretch reads NPQPQQQTTQTTTTAAGSAADQGVP. Low complexity predominate over residues 29–41; that stretch reads PQPQQQTTQTTTT. 4 helical membrane-spanning segments follow: residues 345 to 365, 420 to 440, 458 to 478, and 499 to 519; these read KFIHSFLGNWGFSIIVITFIV, LGGCFPLIIQMPIFLALYYML, LSAQDPYYILPIIMGATMFFI, and PVIFTVFFLWFPSGLVVYYIV.

It belongs to the OXA1/ALB3/YidC family. Type 1 subfamily. Interacts with the Sec translocase complex via SecD. Specifically interacts with transmembrane segments of nascent integral membrane proteins during membrane integration.

It localises to the cell inner membrane. Functionally, required for the insertion and/or proper folding and/or complex formation of integral membrane proteins into the membrane. Involved in integration of membrane proteins that insert both dependently and independently of the Sec translocase complex, as well as at least some lipoproteins. Aids folding of multispanning membrane proteins. This Klebsiella pneumoniae subsp. pneumoniae (strain ATCC 700721 / MGH 78578) protein is Membrane protein insertase YidC.